Reading from the N-terminus, the 463-residue chain is Probable Xaa-Pro aminopeptidase pepP (463 aa).

Residues aspartate 259, aspartate 270, glutamate 393, and glutamate 433 each contribute to the Mn(2+) site.

This sequence belongs to the peptidase M24B family. Requires Mn(2+) as cofactor.

The catalysed reaction is Release of any N-terminal amino acid, including proline, that is linked to proline, even from a dipeptide or tripeptide.. Its function is as follows. Catalyzes the removal of a penultimate prolyl residue from the N-termini of peptides. This is Probable Xaa-Pro aminopeptidase pepP (pepP) from Pyrenophora teres f. teres (strain 0-1) (Barley net blotch fungus).